Here is a 223-residue protein sequence, read N- to C-terminus: Ubiquitin-conjugating enzyme E2 S (223 aa).

An N-acetylmethionine modification is found at Met1. The region spanning 11-157 (HIIRLVYKEV…ARLLTEIHGG (147 aa)) is the UBC core domain. Cys95 (glycyl thioester intermediate) is an active-site residue. The tract at residues 155–223 (HGGAGGPSGG…TDKKRALRRL (69 aa)) is disordered. Residues 169-195 (GRATASGAAASTADPTAPGGPAGAEGP) are compositionally biased toward low complexity. Ser174 carries the phosphoserine modification. Residues 209–223 (AAKKKTDKKRALRRL) show a composition bias toward basic residues.

The protein belongs to the ubiquitin-conjugating enzyme family. In terms of assembly, component of the APC/C complex, composed of at least 14 distinct subunits that assemble into a complex of at least 19 chains with a combined molecular mass of around 1.2 MDa. Within this complex, directly interacts with ANAPC2 and ANAPC4. Interacts with CDC20, FZR1/CDH1 and VHL. Autoubiquitinated by the APC/C complex during G1, leading to its degradation by the proteasome.

It carries out the reaction S-ubiquitinyl-[E1 ubiquitin-activating enzyme]-L-cysteine + [E2 ubiquitin-conjugating enzyme]-L-cysteine = [E1 ubiquitin-activating enzyme]-L-cysteine + S-ubiquitinyl-[E2 ubiquitin-conjugating enzyme]-L-cysteine.. The protein operates within protein modification; protein ubiquitination. Accepts ubiquitin from the E1 complex and catalyzes its covalent attachment to other proteins. Catalyzes 'Lys-11'-linked polyubiquitination. Acts as an essential factor of the anaphase promoting complex/cyclosome (APC/C), a cell cycle-regulated ubiquitin ligase that controls progression through mitosis. Acts by specifically elongating 'Lys-11'-linked polyubiquitin chains initiated by the E2 enzyme UBE2C/UBCH10 on APC/C substrates, enhancing the degradation of APC/C substrates by the proteasome and promoting mitotic exit. Also acts by elongating ubiquitin chains initiated by the E2 enzyme UBE2D1/UBCH5 in vitro; it is however unclear whether UBE2D1/UBCH5 acts as an E2 enzyme for the APC/C in vivo. Also involved in ubiquitination and subsequent degradation of VHL, resulting in an accumulation of HIF1A. In vitro able to promote polyubiquitination using all 7 ubiquitin Lys residues, except 'Lys-48'-linked polyubiquitination. This is Ubiquitin-conjugating enzyme E2 S (UBE2S) from Bos taurus (Bovine).